The chain runs to 162 residues: D-aminoacyl-tRNA deacylase (162 aa).

Residues 145-146 carry the Gly-cisPro motif, important for rejection of L-amino acids motif; that stretch reads GP.

Belongs to the DTD family. Homodimer.

Its subcellular location is the cytoplasm. The enzyme catalyses glycyl-tRNA(Ala) + H2O = tRNA(Ala) + glycine + H(+). The catalysed reaction is a D-aminoacyl-tRNA + H2O = a tRNA + a D-alpha-amino acid + H(+). An aminoacyl-tRNA editing enzyme that deacylates mischarged D-aminoacyl-tRNAs. Also deacylates mischarged glycyl-tRNA(Ala), protecting cells against glycine mischarging by AlaRS. Acts via tRNA-based rather than protein-based catalysis; rejects L-amino acids rather than detecting D-amino acids in the active site. By recycling D-aminoacyl-tRNA to D-amino acids and free tRNA molecules, this enzyme counteracts the toxicity associated with the formation of D-aminoacyl-tRNA entities in vivo and helps enforce protein L-homochirality. The chain is D-aminoacyl-tRNA deacylase from Bifidobacterium longum (strain DJO10A).